Here is a 392-residue protein sequence, read N- to C-terminus: Erythronate-4-phosphate dehydrogenase (392 aa).

Residues Ser-48 and Thr-69 each contribute to the substrate site. Residue Asp-149 coordinates NAD(+). Arg-215 is an active-site residue. Asp-239 lines the NAD(+) pocket. Residue Glu-244 is part of the active site. His-261 acts as the Proton donor in catalysis. Residue Gly-264 coordinates NAD(+). Tyr-265 serves as a coordination point for substrate.

Belongs to the D-isomer specific 2-hydroxyacid dehydrogenase family. PdxB subfamily. Homodimer.

The protein resides in the cytoplasm. It carries out the reaction 4-phospho-D-erythronate + NAD(+) = (R)-3-hydroxy-2-oxo-4-phosphooxybutanoate + NADH + H(+). Its pathway is cofactor biosynthesis; pyridoxine 5'-phosphate biosynthesis; pyridoxine 5'-phosphate from D-erythrose 4-phosphate: step 2/5. Catalyzes the oxidation of erythronate-4-phosphate to 3-hydroxy-2-oxo-4-phosphonooxybutanoate. The polypeptide is Erythronate-4-phosphate dehydrogenase (Salinibacter ruber (strain DSM 13855 / M31)).